Reading from the N-terminus, the 667-residue chain is NADPH--cytochrome P450 reductase (667 aa).

Topologically, residues 1 to 8 (MEILESID) are lumenal. The helical transmembrane segment at 9-29 (FIEVLILDNLGAIIIVAVIVG) threads the bilayer. Residues 30–667 (TYLYMNKPPP…HGRYLQDVWF (638 aa)) lie on the Cytoplasmic side of the membrane. The region spanning 72–215 (MKIFFGTQTR…DFNRWKKDMW (144 aa)) is the Flavodoxin-like domain. FMN-binding positions include 164-173 (LGNKTYEHYN) and Asp199. Positions 277–511 (KNPYYAEVLE…FVRESHFKLP (235 aa)) constitute an FAD-binding FR-type domain. An NADP(+)-binding site is contributed by Arg297. FAD-binding positions include 468 to 470 (TSV) and 484 to 487 (GVAS). NADP(+) is bound by residues Thr527, 586–587 (SR), and 592–596 (KVYVQ). FAD is bound at residue Trp666.

The protein belongs to the NADPH--cytochrome P450 reductase family. It in the N-terminal section; belongs to the flavodoxin family. This sequence in the C-terminal section; belongs to the flavoprotein pyridine nucleotide cytochrome reductase family. It depends on FAD as a cofactor. FMN is required as a cofactor.

It is found in the endoplasmic reticulum membrane. It catalyses the reaction 2 oxidized [cytochrome P450] + NADPH = 2 reduced [cytochrome P450] + NADP(+) + H(+). Functionally, this enzyme is required for electron transfer from NADP to cytochrome P450 in microsomes. It can also provide electron transfer to heme oxygenase and cytochrome B5. This is NADPH--cytochrome P450 reductase (redB) from Dictyostelium discoideum (Social amoeba).